Reading from the N-terminus, the 323-residue chain is MKSALFTRFFILLPWILIVIIMLDVDTRRPVPPLTPRPYFSPYAVGRGGARLPLRRGGPAHGTQKRNQSRPQPQPEPQLPTIYAITPTYSRPVQKAELTRLANTFRQVAQLHWILVEDAAARSELVSRFLARAGLPSTHLHVPTPRRYKRPGLPRATEQRNAGLAWLRQRHQHQRAQPGVLFFADDDNTYSLELFQEMRTTRKVSVWPVGLVGGRRYERPLVENGKVVGWYTGWRADRPFAIDMAGFAVSLQVILSNPKAVFKRRGSQPGMQESDFLKQITTVEELEPKANNCTKVLVWHTRTEKVNLANEPKYHLDTVKIEV.

Topologically, residues 1–2 (MK) are cytoplasmic. Residues 3 to 23 (SALFTRFFILLPWILIVIIML) traverse the membrane as a helical; Signal-anchor for type II membrane protein segment. Residues 24–323 (DVDTRRPVPP…YHLDTVKIEV (300 aa)) lie on the Lumenal side of the membrane. The segment at 51–80 (RLPLRRGGPAHGTQKRNQSRPQPQPEPQLP) is disordered. A glycan (N-linked (GlcNAc...) asparagine) is linked at asparagine 67. Residues 87–89 (PTY), aspartate 118, arginine 155, arginine 160, and 185–187 (DDD) contribute to the UDP-alpha-D-glucuronate site. Residue aspartate 187 participates in Mn(2+) binding. The tract at residues 234 to 243 (WRADRPFAID) is interaction with galactose moiety of substrate glycoprotein. Glutamate 273 (proton donor/acceptor) is an active-site residue. Asparagine 292 carries N-linked (GlcNAc...) asparagine glycosylation. 300-302 (HTR) serves as a coordination point for UDP-alpha-D-glucuronate.

It belongs to the glycosyltransferase 43 family. In terms of assembly, homodimer. Requires Mn(2+) as cofactor. Expressed in the trachea, retina, spinal cord, hippocampus and other brain regions, and, at lower levels, in testis and ovary.

It is found in the golgi apparatus membrane. It carries out the reaction 3-O-(beta-D-galactosyl-(1-&gt;3)-beta-D-galactosyl-(1-&gt;4)-beta-D-xylosyl)-L-seryl-[protein] + UDP-alpha-D-glucuronate = 3-O-(beta-D-GlcA-(1-&gt;3)-beta-D-Gal-(1-&gt;3)-beta-D-Gal-(1-&gt;4)-beta-D-Xyl)-L-seryl-[protein] + UDP + H(+). The protein operates within protein modification; protein glycosylation. Functionally, involved in the biosynthesis of L2/HNK-1 carbohydrate epitope on both glycolipids and glycoproteins. The polypeptide is Galactosylgalactosylxylosylprotein 3-beta-glucuronosyltransferase 2 (B3GAT2) (Homo sapiens (Human)).